The following is a 108-amino-acid chain: UPF0060 membrane protein CKO_01576 (108 aa).

A run of 4 helical transmembrane segments spans residues 6-26 (LLFF…WLWL), 29-49 (GATA…VWLL), 61-81 (AAYG…VDGV), and 85-105 (LYDW…VAGW).

The protein belongs to the UPF0060 family.

The protein resides in the cell inner membrane. The polypeptide is UPF0060 membrane protein CKO_01576 (Citrobacter koseri (strain ATCC BAA-895 / CDC 4225-83 / SGSC4696)).